A 1203-amino-acid polypeptide reads, in one-letter code: DNA-directed RNA polymerase I subunit RPA135 (1203 aa).

S2 bears the N-acetylserine mark. Residue S81 is modified to Phosphoserine. A C4-type zinc finger spans residues 1104 to 1131 (CRECGSILTTQQSVPRIGSISTVCCRRC). A Phosphoserine modification is found at S1156.

It belongs to the RNA polymerase beta chain family. As to quaternary structure, component of the RNA polymerase I (Pol I) complex consisting of 14 subunits: RPA135, RPA190, RPC40, RPA14, RPB5, RPO26, RPA43, RPB8, RPA12, RPB10, RPC19, RPC10, RPA49 and RPA34. The complex is composed of a horseshoe-shaped core containing ten subunits (RPA135, RPA190, RPB5, RPO26, RPB8, RPB10, RPC10, RPA12, RPC19 and RPC40) where RPA135 and RPA190 form the DNA-binding cleft. Outside of the core, RPA14 and RPA43 form the stalk that mediates interactions with transcription initiation factors and newly synthesized RNA.

Its subcellular location is the nucleus. It is found in the nucleolus. It carries out the reaction RNA(n) + a ribonucleoside 5'-triphosphate = RNA(n+1) + diphosphate. Its function is as follows. DNA-dependent RNA polymerases catalyze the transcription of DNA into RNA using the four ribonucleoside triphosphates as substrates. Component of RNA polymerase I (Pol I) which synthesizes ribosomal RNA precursors. Besides, RNA polymerase I has intrinsic RNA cleavage activity. RPA190 and RPA135 both contribute to the polymerase catalytic activity and together form the Pol I active center. In addition, subunit RPA12 contributes a catalytic zinc ribbon that is required for RNA cleavage by Pol I. A single stranded DNA template strand of the promoter is positioned within the central active site cleft of Pol I. A bridging helix emanates from RPA190 and crosses the cleft near the catalytic site and is thought to promote translocation of Pol I by acting as a ratchet that moves the RNA-DNA hybrid through the active site by switching from straight to bent conformations at each step of nucleotide addition. This is DNA-directed RNA polymerase I subunit RPA135 (RPA135) from Saccharomyces cerevisiae (strain ATCC 204508 / S288c) (Baker's yeast).